The primary structure comprises 244 residues: MDRYGEKQQQQQMFASYVDASLLAASGEVQGERPRARRRRRRGARCVGGGGGGGEVDGGDPKKRRLSDEQVEMLELSFREERKLETGRKVHLASELGLDPKQVAVWFQNRRARHKSKLLEEEFSKLKHAHDAAILHKCHLENEVLRLKERLVVAEEEVRRLRSAAGSHTASGEGGDIMGLGGSGACVAGSPSSSFSTGTCQPPSFGGGGGGGDHLGDDDLVYVPEYGGYADNSVVEWFSLYGLI.

The interval 25–64 (ASGEVQGERPRARRRRRRGARCVGGGGGGGEVDGGDPKKR) is disordered. Over residues 35-44 (RARRRRRRGA) the composition is skewed to basic residues. Residues 46-56 (CVGGGGGGGEV) are compositionally biased toward gly residues. A DNA-binding region (homeobox) is located at residues 59–118 (GDPKKRRLSDEQVEMLELSFREERKLETGRKVHLASELGLDPKQVAVWFQNRRARHKSKL). Positions 108-167 (QNRRARHKSKLLEEEFSKLKHAHDAAILHKCHLENEVLRLKERLVVAEEEVRRLRSAAGS) form a coiled coil.

The protein belongs to the HD-ZIP homeobox family. Class I subfamily. As to expression, expressed in roots, stems, leaf blades and panicles.

Its subcellular location is the nucleus. Functionally, probable transcription factor. The chain is Homeobox-leucine zipper protein HOX14 (HOX14) from Oryza sativa subsp. indica (Rice).